The following is an 804-amino-acid chain: MAHSMSRPVAATAAALLALALPQALAQANTSYVDYNIEANPDLYPLCIETIPLSFPDCQNGPLRSHLICDETATPYDRAASLISLFTLDELIANTGNTGLGVSRLGLPAYQVWSEALHGLDRANFSDSGAYNWATSFPQPILTTAALNRTLIHQIASIISTQGRAFNNAGRYGLDVYAPNINTFRHPVWGRGQETPGEDVSLAAVYAYEYITGIQGPDPESNLKLAATAKHYAGYDIENWHNHSRLGNDMNITQQDLSEYYTPQFHVAARDAKVQSVMCAYNAVNGVPACADSYFLQTLLRDTFGFVDHGYVSSDCDAAYNIYNPHGYASSQAAAAAEAILAGTDIDCGTTYQWHLNESIAAGDLSRDDIEQGVIRLYTTLVQAGYFDSNTTKANNPYRDLSWSDVLETDAWNISYQAATQGIVLLKNSNNVLPLTEKAYPPSNTTVALIGPWANATTQLLGNYYGNAPYMISPRAAFEEAGYKVNFAEGTGISSTSTSGFAAALSAAQSADVIIYAGGIDNTLEAEALDRESIAWPGNQLDLIQKLASAAGKKPLIVLQMGGGQVDSSSLKNNTNVSALLWGGYPGQSGGFALRDIITGKKNPAGRLVTTQYPASYAEEFPATDMNLRPEGDNPGQTYKWYTGEAVYEFGHGLFYTTFAESSSNTTTKEVKLNIQDILSQTHEDLASITQLPVLNFTANIRNTGKLESDYTAMVFANTSDAGPAPYPKKWLVGWDRLGEVKVGETRELRVPVEVGSFARVNEDGDWVVFPGTFELALNLERKVRVKVVLEGEEEVVLKWPGKE.

The N-terminal stretch at 1–26 is a signal peptide; sequence MAHSMSRPVAATAAALLALALPQALA. N-linked (GlcNAc...) asparagine glycosylation is found at Asn29, Asn124, Asn148, Asn242, and Asn251. Asp315 is a catalytic residue. Residues Asn357, Asn390, Asn413, Asn444, Asn455, Asn573, Asn576, Asn665, Asn696, and Asn718 are each glycosylated (N-linked (GlcNAc...) asparagine).

Belongs to the glycosyl hydrolase 3 family.

It is found in the secreted. It carries out the reaction Hydrolysis of (1-&gt;4)-beta-D-xylans, to remove successive D-xylose residues from the non-reducing termini.. The protein operates within glycan degradation; xylan degradation. Its function is as follows. Xylan 1,4-beta-xylosidase involved in the hydrolysis of xylan, a major structural heterogeneous polysaccharide found in plant biomass representing the second most abundant polysaccharide in the biosphere, after cellulose. In Aspergillus niger (strain ATCC MYA-4892 / CBS 513.88 / FGSC A1513), this protein is Probable exo-1,4-beta-xylosidase xlnD (xlnD).